The primary structure comprises 299 residues: Mitochondrial 2-oxodicarboxylate carrier (299 aa).

Solcar repeat units lie at residues 11-100 (NEAS…YKKL), 107-196 (SPAL…VKNI), and 205-294 (LEFL…TYSW). Helical transmembrane passes span 17–37 (ILAG…LDVV), 62–82 (MIFR…PILA), 100–120 (LLGY…LGSG), 179–199 (HGVF…IIPV), 211–231 (FGIG…FDVA), and 274–290 (IMRL…VYEY).

It belongs to the mitochondrial carrier (TC 2.A.29) family.

The protein localises to the mitochondrion inner membrane. The enzyme catalyses 2-oxoadipate(in) + 2-oxoglutarate(out) = 2-oxoadipate(out) + 2-oxoglutarate(in). It carries out the reaction hexanedioate(in) + 2-oxoglutarate(out) = hexanedioate(out) + 2-oxoglutarate(in). The catalysed reaction is L-2-aminoadipate(in) + 2-oxoglutarate(out) = L-2-aminoadipate(out) + 2-oxoglutarate(in). It catalyses the reaction glutarate(in) + 2-oxoglutarate(out) = glutarate(out) + 2-oxoglutarate(in). The enzyme catalyses 2-oxoheptanedioate(in) + 2-oxoglutarate(out) = 2-oxoheptanedioate(out) + 2-oxoglutarate(in). It carries out the reaction heptanedioate(in) + 2-oxoglutarate(out) = heptanedioate(out) + 2-oxoglutarate(in). The catalysed reaction is citrate(in) + 2-oxoglutarate(out) = citrate(out) + 2-oxoglutarate(in). Its function is as follows. Transports dicarboxylates across the inner membranes of mitochondria by a counter-exchange mechanism. Can transport 2-oxoadipate (2-oxohexanedioate), 2-oxoglutarate, adipate (hexanedioate), glutarate, and to a lesser extent, pimelate (heptanedioate), 2-oxopimelate (2-oxoheptanedioate), 2-aminoadipate (2-aminohexanedioate), oxaloacetate, and citrate. Plays a central role in catabolism of lysine, hydroxylysine, and tryptophan, by transporting common metabolite intermediates (such as 2-oxoadipate) into the mitochondria, where it is converted into acetyl-CoA and can enter the citric acid (TCA) cycle. This Bos taurus (Bovine) protein is Mitochondrial 2-oxodicarboxylate carrier (SLC25A21).